The sequence spans 138 residues: Endoribonuclease YbeY (138 aa).

3 residues coordinate Zn(2+): histidine 98, histidine 102, and histidine 108.

It belongs to the endoribonuclease YbeY family. Zn(2+) is required as a cofactor.

The protein resides in the cytoplasm. Its function is as follows. Single strand-specific metallo-endoribonuclease involved in late-stage 70S ribosome quality control and in maturation of the 3' terminus of the 16S rRNA. The sequence is that of Endoribonuclease YbeY from Thermosipho melanesiensis (strain DSM 12029 / CIP 104789 / BI429).